Consider the following 518-residue polypeptide: Protein nucleotidyltransferase YdiU (518 aa).

Residues 1 to 10 (MTHLQFDNRL) show a composition bias toward basic and acidic residues. The tract at residues 1-23 (MTHLQFDNRLRAQLPGDPEQGPR) is disordered. ATP contacts are provided by G100, G102, R103, K123, D135, G136, R193, and R200. D270 (proton acceptor) is an active-site residue. Mg(2+) contacts are provided by N271 and D280. D280 serves as a coordination point for ATP.

This sequence belongs to the SELO family. Requires Mg(2+) as cofactor. Mn(2+) serves as cofactor.

It catalyses the reaction L-seryl-[protein] + ATP = 3-O-(5'-adenylyl)-L-seryl-[protein] + diphosphate. It carries out the reaction L-threonyl-[protein] + ATP = 3-O-(5'-adenylyl)-L-threonyl-[protein] + diphosphate. The catalysed reaction is L-tyrosyl-[protein] + ATP = O-(5'-adenylyl)-L-tyrosyl-[protein] + diphosphate. The enzyme catalyses L-histidyl-[protein] + UTP = N(tele)-(5'-uridylyl)-L-histidyl-[protein] + diphosphate. It catalyses the reaction L-seryl-[protein] + UTP = O-(5'-uridylyl)-L-seryl-[protein] + diphosphate. It carries out the reaction L-tyrosyl-[protein] + UTP = O-(5'-uridylyl)-L-tyrosyl-[protein] + diphosphate. Its function is as follows. Nucleotidyltransferase involved in the post-translational modification of proteins. It can catalyze the addition of adenosine monophosphate (AMP) or uridine monophosphate (UMP) to a protein, resulting in modifications known as AMPylation and UMPylation. The sequence is that of Protein nucleotidyltransferase YdiU from Xanthomonas campestris pv. campestris (strain B100).